Reading from the N-terminus, the 66-residue chain is MKTSVLFVIFGLALLLCLSFAAELEDTGRQCGEFMWKCGAGKPTCCSGYDCSPTWKWCVLKSPGRR.

The N-terminal stretch at 1 to 21 (MKTSVLFVIFGLALLLCLSFA) is a signal peptide. The propeptide occupies 22 to 29 (AELEDTGR). Disulfide bonds link cysteine 31–cysteine 46, cysteine 38–cysteine 51, and cysteine 45–cysteine 58.

Belongs to the neurotoxin 10 (Hwtx-1) family. 29 (Jztx-13) subfamily. Expressed by the venom gland.

The protein resides in the secreted. Probable ion channel inhibitor. In Chilobrachys guangxiensis (Chinese earth tiger tarantula), this protein is U10-theraphotoxin-Cg1a 2.